A 275-amino-acid chain; its full sequence is Type III pantothenate kinase (275 aa).

6 to 13 contributes to the ATP binding site; sequence DAGNTNIV. 108–111 is a substrate binding site; the sequence is GADR. Asp110 acts as the Proton acceptor in catalysis. Position 130 (Asp130) interacts with K(+). Thr133 lines the ATP pocket. Thr187 contacts substrate.

The protein belongs to the type III pantothenate kinase family. Homodimer. Requires NH4(+) as cofactor. K(+) is required as a cofactor.

It is found in the cytoplasm. It catalyses the reaction (R)-pantothenate + ATP = (R)-4'-phosphopantothenate + ADP + H(+). The protein operates within cofactor biosynthesis; coenzyme A biosynthesis; CoA from (R)-pantothenate: step 1/5. Catalyzes the phosphorylation of pantothenate (Pan), the first step in CoA biosynthesis. This chain is Type III pantothenate kinase, found in Zymomonas mobilis subsp. mobilis (strain ATCC 31821 / ZM4 / CP4).